Reading from the N-terminus, the 87-residue chain is Large ribosomal subunit protein bL28 (87 aa).

Belongs to the bacterial ribosomal protein bL28 family.

The polypeptide is Large ribosomal subunit protein bL28 (Methylacidiphilum infernorum (isolate V4) (Methylokorus infernorum (strain V4))).